The sequence spans 310 residues: 3,5-dioxohexanoate:acetyl-CoA acetone transferase (310 aa).

Zn(2+) contacts are provided by H49, H51, and E258.

The protein belongs to the BKACE family. Zn(2+) serves as cofactor.

It catalyses the reaction 3,5-dioxohexanoate + acetyl-CoA = acetoacetyl-CoA + acetoacetate. In terms of biological role, catalyzes the condensation of 3,5-dioxohexanoate and acetyl-CoA, forming acetoacetate and acetoacetyl-CoA. May be involved in fatty acid biosynthesis rescue via triacetic acid lactone. The protein is 3,5-dioxohexanoate:acetyl-CoA acetone transferase of Paraburkholderia graminis (strain ATCC 700544 / DSM 17151 / LMG 18924 / NCIMB 13744 / C4D1M).